Here is a 499-residue protein sequence, read N- to C-terminus: Probable UTP--glucose-1-phosphate uridylyltransferase (499 aa).

UTP is bound by residues 108–111 (LNGG), Lys122, Gln185, and Gly214. 110–111 (GG) is a substrate binding site. Residues His215 and 243 to 245 (NID) contribute to the substrate site. UTP-binding residues include Asp245 and Lys387.

This sequence belongs to the UDPGP type 1 family.

The protein resides in the cytoplasm. The protein localises to the nucleus. It carries out the reaction alpha-D-glucose 1-phosphate + UTP + H(+) = UDP-alpha-D-glucose + diphosphate. Its function is as follows. Plays a central role as a glucosyl donor in cellular metabolic pathways. This Schizosaccharomyces pombe (strain 972 / ATCC 24843) (Fission yeast) protein is Probable UTP--glucose-1-phosphate uridylyltransferase.